A 908-amino-acid chain; its full sequence is Glutamate receptor ionotropic, kainate 2 (908 aa).

An N-terminal signal peptide occupies residues 1 to 31 (MKIISPVLSNLVFSRSIKVLLCLLWIGYSQG). Topologically, residues 32–561 (TTHVLRFGGI…VFSFLNPLSP (530 aa)) are extracellular. N-linked (GlcNAc...) asparagine glycosylation is found at Asn-67, Asn-73, Asn-275, Asn-378, Asn-412, Asn-423, and Asn-430. Cys-96 and Cys-347 are oxidised to a cystine. Residues Pro-516, Ala-518, and Arg-523 each contribute to the L-glutamate site. A glycan (N-linked (GlcNAc...) asparagine) is linked at Asn-546. A helical transmembrane segment spans residues 562–582 (DIWMYILLAYLGVSCVLFVIA). The Cytoplasmic segment spans residues 583 to 638 (RFSPYEWYNPHPCNPDSDVVENNFTLLNSFWFGVGALMQQGSELMPKALSTRIVGG). The chain crosses the membrane as a helical span at residues 639–659 (IWWFFTLIIISSYTANLAAFL). The Extracellular portion of the chain corresponds to 660–819 (TVERMESPID…KEASALGVQN (160 aa)). 3 residues coordinate L-glutamate: Ala-689, Thr-690, and Glu-738. Cys-750 and Cys-804 are joined by a disulfide. N-linked (GlcNAc...) asparagine glycosylation is present at Asn-751. Residues 820–840 (IGGIFIVLAAGLVLSVFVAVG) form a helical membrane-spanning segment. Over 841 to 908 (EFLYKSKKNA…RRLPGKETMA (68 aa)) the chain is Cytoplasmic. Phosphoserine; by PKC occurs at positions 846 and 868. A Glycyl lysine isopeptide (Lys-Gly) (interchain with G-Cter in SUMO1) cross-link involves residue Lys-886.

It belongs to the glutamate-gated ion channel (TC 1.A.10.1) family. GRIK2 subfamily. In terms of assembly, homotetramer and heterotetramer with GRIK5. Tetramers may be formed by the dimerization of dimers. Assembles into a kainate-gated homomeric channel that does not bind AMPA. Can form functional heteromeric receptors with GRIK4 and GRIK5. Can form functional heteromeric receptors with GRIK3. Interacts with DLG4. Interacts with NETO2. Interacts (via C-terminus) with KLHL17 (via kelch repeats); the interaction targets GRIK2 for degradation via ubiquitin-proteasome pathway. In terms of processing, sumoylation mediates kainate receptor-mediated endocytosis and regulates synaptic transmission. Sumoylation is enhanced by PIAS3 and desumoylated by SENP1. Ubiquitinated. Ubiquitination regulates the GRIK2 levels at the synapse by leading kainate receptor degradation through proteasome. Post-translationally, phosphorylated by PKC at Ser-868 upon agonist activation, this directly enhance sumoylation. Highest expression is found in the olfactory lobe, piriform cortex, dentate gyrus, hippocampus, granular cell layer of the cerebellum, and in caudate-putamen.

Its subcellular location is the cell membrane. The protein resides in the postsynaptic cell membrane. The enzyme catalyses Ca(2+)(in) = Ca(2+)(out). The catalysed reaction is Na(+)(in) = Na(+)(out). Cold receptor activity activated by temperatures between 10-19 degrees Celsius. In terms of biological role, ionotropic glutamate receptor that functions as a cation-permeable ligand-gated ion channel, gated by L-glutamate and the glutamatergic agonist kainic acid. L-glutamate acts as an excitatory neurotransmitter at many synapses in the central nervous system. Binding of the excitatory neurotransmitter L-glutamate induces a conformation change, leading to the opening of the cation channel, and thereby converts the chemical signal to an electrical impulse. The receptor then desensitizes rapidly and enters a transient inactive state, characterized by the presence of bound agonist. Modulates cell surface expression of NETO2. In association with GRIK3, involved in presynaptic facilitation of glutamate release at hippocampal mossy fiber synapses. Independent of its ionotropic glutamate receptor activity, acts as a thermoreceptor conferring sensitivity to cold temperatures. Functions in dorsal root ganglion neurons. The protein is Glutamate receptor ionotropic, kainate 2 (Grik2) of Rattus norvegicus (Rat).